A 112-amino-acid polypeptide reads, in one-letter code: Protein 4.2 (112 aa).

A disordered region spans residues 64–93 (KPDGLNHQVTQGKKSHTQSQQTGPTTLTSD). The segment covering 70–92 (HQVTQGKKSHTQSQQTGPTTLTS) has biased composition (polar residues).

This Escherichia phage T7 (Bacteriophage T7) protein is Protein 4.2.